We begin with the raw amino-acid sequence, 132 residues long: Small ribosomal subunit protein uS8 (132 aa).

It belongs to the universal ribosomal protein uS8 family. Part of the 30S ribosomal subunit. Contacts proteins S5 and S12.

Its function is as follows. One of the primary rRNA binding proteins, it binds directly to 16S rRNA central domain where it helps coordinate assembly of the platform of the 30S subunit. This Streptomyces griseus subsp. griseus (strain JCM 4626 / CBS 651.72 / NBRC 13350 / KCC S-0626 / ISP 5235) protein is Small ribosomal subunit protein uS8.